The primary structure comprises 79 residues: Large ribosomal subunit protein bL31 (79 aa).

It belongs to the bacterial ribosomal protein bL31 family. Type A subfamily. As to quaternary structure, part of the 50S ribosomal subunit.

Binds the 23S rRNA. The polypeptide is Large ribosomal subunit protein bL31 (Synechococcus sp. (strain CC9902)).